Here is a 75-residue protein sequence, read N- to C-terminus: Small ribosomal subunit protein bS18 (75 aa).

The protein belongs to the bacterial ribosomal protein bS18 family. Part of the 30S ribosomal subunit. Forms a tight heterodimer with protein bS6.

In terms of biological role, binds as a heterodimer with protein bS6 to the central domain of the 16S rRNA, where it helps stabilize the platform of the 30S subunit. This chain is Small ribosomal subunit protein bS18, found in Mycoplasma mycoides subsp. mycoides SC (strain CCUG 32753 / NCTC 10114 / PG1).